The chain runs to 392 residues: Na(+)/H(+) antiporter NhaA (392 aa).

11 consecutive transmembrane segments (helical) span residues 17-37, 59-79, 95-115, 125-145, 154-174, 179-199, 213-233, 254-274, 290-310, 328-348, and 363-383; these read ILLIVAAIIALIMANTPLSAL, LILWVNDALMAIFFLVVGLEV, IFPAIAAVGGMLAPALIYLFF, GWAIPAATDIAFALGVMALLG, VFLLALAIIDDLGVIVIIALF, VALVPLLLAALITIMLFILNW, FILWVCILKSGIHATIAGVIV, VLHPWVAYLILPLFAFSNAGV, VGIALGLFLGKPIGIFLFSWV, IFAVSVLCGIGFTMSIFIAGL, and LGILVGSTMAAVVGYLLLNSV.

Belongs to the NhaA Na(+)/H(+) (TC 2.A.33) antiporter family.

Its subcellular location is the cell inner membrane. The enzyme catalyses Na(+)(in) + 2 H(+)(out) = Na(+)(out) + 2 H(+)(in). In terms of biological role, na(+)/H(+) antiporter that extrudes sodium in exchange for external protons. This chain is Na(+)/H(+) antiporter NhaA, found in Proteus mirabilis (strain HI4320).